Here is a 227-residue protein sequence, read N- to C-terminus: Cytochrome c oxidase subunit 2 (227 aa).

Topologically, residues 1-14 (MAHPAQLGLQDATS) are mitochondrial intermembrane. Residues 15-45 (PVMEELITFHDHALMAMSLISLLVLYALFST) traverse the membrane as a helical segment. The Mitochondrial matrix segment spans residues 46-59 (LTTKMTNTNITDAQ). Residues 60 to 87 (EMETIWTILPAIILVLIAFPSLRILYMT) form a helical membrane-spanning segment. At 88–227 (DEVNNPSFTI…IFEMGPVFTL (140 aa)) the chain is on the mitochondrial intermembrane side. Cu cation is bound by residues H161, C196, E198, C200, H204, and M207. A Mg(2+)-binding site is contributed by E198.

The protein belongs to the cytochrome c oxidase subunit 2 family. As to quaternary structure, component of the cytochrome c oxidase (complex IV, CIV), a multisubunit enzyme composed of 14 subunits. The complex is composed of a catalytic core of 3 subunits MT-CO1, MT-CO2 and MT-CO3, encoded in the mitochondrial DNA, and 11 supernumerary subunits COX4I, COX5A, COX5B, COX6A, COX6B, COX6C, COX7A, COX7B, COX7C, COX8 and NDUFA4, which are encoded in the nuclear genome. The complex exists as a monomer or a dimer and forms supercomplexes (SCs) in the inner mitochondrial membrane with NADH-ubiquinone oxidoreductase (complex I, CI) and ubiquinol-cytochrome c oxidoreductase (cytochrome b-c1 complex, complex III, CIII), resulting in different assemblies (supercomplex SCI(1)III(2)IV(1) and megacomplex MCI(2)III(2)IV(2)). Found in a complex with TMEM177, COA6, COX18, COX20, SCO1 and SCO2. Interacts with TMEM177 in a COX20-dependent manner. Interacts with COX20. Interacts with COX16. Cu cation serves as cofactor.

Its subcellular location is the mitochondrion inner membrane. The enzyme catalyses 4 Fe(II)-[cytochrome c] + O2 + 8 H(+)(in) = 4 Fe(III)-[cytochrome c] + 2 H2O + 4 H(+)(out). In terms of biological role, component of the cytochrome c oxidase, the last enzyme in the mitochondrial electron transport chain which drives oxidative phosphorylation. The respiratory chain contains 3 multisubunit complexes succinate dehydrogenase (complex II, CII), ubiquinol-cytochrome c oxidoreductase (cytochrome b-c1 complex, complex III, CIII) and cytochrome c oxidase (complex IV, CIV), that cooperate to transfer electrons derived from NADH and succinate to molecular oxygen, creating an electrochemical gradient over the inner membrane that drives transmembrane transport and the ATP synthase. Cytochrome c oxidase is the component of the respiratory chain that catalyzes the reduction of oxygen to water. Electrons originating from reduced cytochrome c in the intermembrane space (IMS) are transferred via the dinuclear copper A center (CU(A)) of subunit 2 and heme A of subunit 1 to the active site in subunit 1, a binuclear center (BNC) formed by heme A3 and copper B (CU(B)). The BNC reduces molecular oxygen to 2 water molecules using 4 electrons from cytochrome c in the IMS and 4 protons from the mitochondrial matrix. In Mandrillus leucophaeus (Drill), this protein is Cytochrome c oxidase subunit 2 (MT-CO2).